Consider the following 158-residue polypeptide: SsrA-binding protein (158 aa).

The tract at residues 135–158 (DKRKTLKDRDWERDKQRGFKKDLD) is disordered. Over residues 141 to 158 (KDRDWERDKQRGFKKDLD) the composition is skewed to basic and acidic residues.

This sequence belongs to the SmpB family.

It localises to the cytoplasm. Required for rescue of stalled ribosomes mediated by trans-translation. Binds to transfer-messenger RNA (tmRNA), required for stable association of tmRNA with ribosomes. tmRNA and SmpB together mimic tRNA shape, replacing the anticodon stem-loop with SmpB. tmRNA is encoded by the ssrA gene; the 2 termini fold to resemble tRNA(Ala) and it encodes a 'tag peptide', a short internal open reading frame. During trans-translation Ala-aminoacylated tmRNA acts like a tRNA, entering the A-site of stalled ribosomes, displacing the stalled mRNA. The ribosome then switches to translate the ORF on the tmRNA; the nascent peptide is terminated with the 'tag peptide' encoded by the tmRNA and targeted for degradation. The ribosome is freed to recommence translation, which seems to be the essential function of trans-translation. This is SsrA-binding protein from Psychrobacter arcticus (strain DSM 17307 / VKM B-2377 / 273-4).